We begin with the raw amino-acid sequence, 215 residues long: TLD domain-containing protein 2 (215 aa).

Residues 1–46 (MRGLRWRYTRLPSQVEDTLSGEEGNEEEEEEEAAPDPAAAPEDPTV) form a disordered region. The segment covering 19-34 (LSGEEGNEEEEEEEAA) has biased composition (acidic residues). One can recognise a TLDc domain in the interval 54 to 215 (QVLSASEIRQ…IQELEAWLLS (162 aa)).

It belongs to the OXR1 family.

The chain is TLD domain-containing protein 2 (TLDC2) from Homo sapiens (Human).